Consider the following 527-residue polypeptide: Protein SDS24 (527 aa).

2 stretches are compositionally biased toward low complexity: residues 1-22 (MAST…LPTS) and 55-74 (TPPT…TPAP). Residues 1 to 75 (MASTSNTFPP…PGCAATPAPL (75 aa)) are disordered. The residue at position 94 (Ser-94) is a Phosphoserine. 4 CBS domains span residues 114 to 175 (IEQN…KITV), 198 to 256 (LTPK…NARS), 283 to 342 (TSRQ…QYPL), and 443 to 512 (LNSH…GNKE). The segment covering 424–447 (AQSSANGATPMSKSSSSTSLNSHS) has biased composition (low complexity). Disordered regions lie at residues 424–478 (AQSS…TNTP) and 508–527 (TGNK…SIAM). Ser-458 and Ser-524 each carry phosphoserine.

The protein belongs to the SDS23 family.

Its subcellular location is the cytoplasm. It is found in the nucleus. Its function is as follows. Involved in DNA replication and cell separation during budding. This chain is Protein SDS24 (SDS24), found in Saccharomyces cerevisiae (strain YJM789) (Baker's yeast).